Reading from the N-terminus, the 164-residue chain is Crossover junction endodeoxyribonuclease RuvC (164 aa).

Residues D7, E67, and D140 contribute to the active site. Residues D7, E67, and D140 each contribute to the Mg(2+) site.

It belongs to the RuvC family. Homodimer which binds Holliday junction (HJ) DNA. The HJ becomes 2-fold symmetrical on binding to RuvC with unstacked arms; it has a different conformation from HJ DNA in complex with RuvA. In the full resolvosome a probable DNA-RuvA(4)-RuvB(12)-RuvC(2) complex forms which resolves the HJ. Requires Mg(2+) as cofactor.

It is found in the cytoplasm. The enzyme catalyses Endonucleolytic cleavage at a junction such as a reciprocal single-stranded crossover between two homologous DNA duplexes (Holliday junction).. In terms of biological role, the RuvA-RuvB-RuvC complex processes Holliday junction (HJ) DNA during genetic recombination and DNA repair. Endonuclease that resolves HJ intermediates. Cleaves cruciform DNA by making single-stranded nicks across the HJ at symmetrical positions within the homologous arms, yielding a 5'-phosphate and a 3'-hydroxyl group; requires a central core of homology in the junction. The consensus cleavage sequence is 5'-(A/T)TT(C/G)-3'. Cleavage occurs on the 3'-side of the TT dinucleotide at the point of strand exchange. HJ branch migration catalyzed by RuvA-RuvB allows RuvC to scan DNA until it finds its consensus sequence, where it cleaves and resolves the cruciform DNA. This chain is Crossover junction endodeoxyribonuclease RuvC, found in Finegoldia magna (strain ATCC 29328 / DSM 20472 / WAL 2508) (Peptostreptococcus magnus).